The sequence spans 302 residues: Putative RING-H2 finger protein ATL35 (302 aa).

Positions 1 to 31 are cleaved as a signal peptide; the sequence is MTIFARDLIYRIETKVLLPLFLVHLLPYVTC. Residues 50–70 traverse the membrane as a helical segment; that stretch reads TVIAIIVLAIFISLSMVACFL. An RING-type; atypical zinc finger spans residues 123–165; the sequence is CAICLSEFVDKETLRWMPPCSHTFHANCIDVWLSSQSTCPACR. Ser226 carries the phosphoserine modification.

This sequence belongs to the RING-type zinc finger family. ATL subfamily.

Its subcellular location is the membrane. It carries out the reaction S-ubiquitinyl-[E2 ubiquitin-conjugating enzyme]-L-cysteine + [acceptor protein]-L-lysine = [E2 ubiquitin-conjugating enzyme]-L-cysteine + N(6)-ubiquitinyl-[acceptor protein]-L-lysine.. It participates in protein modification; protein ubiquitination. This is Putative RING-H2 finger protein ATL35 (ATL35) from Arabidopsis thaliana (Mouse-ear cress).